Reading from the N-terminus, the 163-residue chain is 3-isopropylmalate dehydratase small subunit (163 aa).

It belongs to the LeuD family. LeuD type 2 subfamily. As to quaternary structure, heterodimer of LeuC and LeuD.

The catalysed reaction is (2R,3S)-3-isopropylmalate = (2S)-2-isopropylmalate. The protein operates within amino-acid biosynthesis; L-leucine biosynthesis; L-leucine from 3-methyl-2-oxobutanoate: step 2/4. Catalyzes the isomerization between 2-isopropylmalate and 3-isopropylmalate, via the formation of 2-isopropylmaleate. The chain is 3-isopropylmalate dehydratase small subunit from Clostridioides difficile (strain 630) (Peptoclostridium difficile).